We begin with the raw amino-acid sequence, 274 residues long: Formamidopyrimidine-DNA glycosylase (274 aa).

The active-site Schiff-base intermediate with DNA is P2. Catalysis depends on E3, which acts as the Proton donor. K59 acts as the Proton donor; for beta-elimination activity in catalysis. DNA-binding residues include H93, R112, and K153. An FPG-type zinc finger spans residues 238–272; the sequence is QVHTKFNKPCPNCGELIQKIKLGGRGTYFCKKCQQ. R262 functions as the Proton donor; for delta-elimination activity in the catalytic mechanism.

It belongs to the FPG family. In terms of assembly, monomer. Zn(2+) is required as a cofactor.

The enzyme catalyses Hydrolysis of DNA containing ring-opened 7-methylguanine residues, releasing 2,6-diamino-4-hydroxy-5-(N-methyl)formamidopyrimidine.. The catalysed reaction is 2'-deoxyribonucleotide-(2'-deoxyribose 5'-phosphate)-2'-deoxyribonucleotide-DNA = a 3'-end 2'-deoxyribonucleotide-(2,3-dehydro-2,3-deoxyribose 5'-phosphate)-DNA + a 5'-end 5'-phospho-2'-deoxyribonucleoside-DNA + H(+). In terms of biological role, involved in base excision repair of DNA damaged by oxidation or by mutagenic agents. Acts as a DNA glycosylase that recognizes and removes damaged bases. Has a preference for oxidized purines, such as 7,8-dihydro-8-oxoguanine (8-oxoG). Has AP (apurinic/apyrimidinic) lyase activity and introduces nicks in the DNA strand. Cleaves the DNA backbone by beta-delta elimination to generate a single-strand break at the site of the removed base with both 3'- and 5'-phosphates. This is Formamidopyrimidine-DNA glycosylase from Mycoplasma mobile (strain ATCC 43663 / 163K / NCTC 11711) (Mesomycoplasma mobile).